Here is a 71-residue protein sequence, read N- to C-terminus: Long neurotoxin 1 (71 aa).

Disulfide bonds link C3–C20, C14–C41, C26–C30, C45–C56, and C57–C62.

Belongs to the three-finger toxin family. Long-chain subfamily. Type II alpha-neurotoxin sub-subfamily. As to expression, expressed by the venom gland.

It is found in the secreted. Functionally, binds with high affinity to muscular (alpha-1/CHRNA1) and neuronal (alpha-7/CHRNA7) nicotinic acetylcholine receptor (nAChR) and hinders acetylcholine binding to the receptor, thereby impairing neuromuscular and neuronal transmission. The sequence is that of Long neurotoxin 1 from Naja annulata annulata (Banded water cobra).